Reading from the N-terminus, the 190-residue chain is Large ribosomal subunit protein bL25 (190 aa).

It belongs to the bacterial ribosomal protein bL25 family. CTC subfamily. In terms of assembly, part of the 50S ribosomal subunit; part of the 5S rRNA/L5/L18/L25 subcomplex. Contacts the 5S rRNA. Binds to the 5S rRNA independently of L5 and L18.

In terms of biological role, this is one of the proteins that binds to the 5S RNA in the ribosome where it forms part of the central protuberance. This is Large ribosomal subunit protein bL25 from Neisseria gonorrhoeae (strain ATCC 700825 / FA 1090).